The chain runs to 163 residues: Nucleotide-binding protein RER_17110 (163 aa).

This sequence belongs to the YajQ family.

Nucleotide-binding protein. The protein is Nucleotide-binding protein RER_17110 of Rhodococcus erythropolis (strain PR4 / NBRC 100887).